The following is a 1009-amino-acid chain: UvrABC system protein A (1009 aa).

32–39 (GLSGSGKS) provides a ligand contact to ATP. 2 consecutive ABC transporter domains span residues 314–592 (WSHG…AESQ) and 612–941 (RDPS…KFLR). 645-652 (GVSGSGKS) contributes to the ATP binding site. The C4-type zinc-finger motif lies at 744 to 770 (CENCSGDGTIKIEMNFLPDVYVPCEVC). Positions 956–1009 (KAPRKTAARKTAAAKSTTKKTATVRTTNNTATKKAAAVTKKTAPAKKTTRARKA) are disordered. The segment covering 964-997 (RKTAAAKSTTKKTATVRTTNNTATKKAAAVTKKT) has biased composition (low complexity). Positions 998-1009 (APAKKTTRARKA) are enriched in basic residues.

Belongs to the ABC transporter superfamily. UvrA family. Forms a heterotetramer with UvrB during the search for lesions.

It localises to the cytoplasm. The UvrABC repair system catalyzes the recognition and processing of DNA lesions. UvrA is an ATPase and a DNA-binding protein. A damage recognition complex composed of 2 UvrA and 2 UvrB subunits scans DNA for abnormalities. When the presence of a lesion has been verified by UvrB, the UvrA molecules dissociate. The sequence is that of UvrABC system protein A from Streptomyces avermitilis (strain ATCC 31267 / DSM 46492 / JCM 5070 / NBRC 14893 / NCIMB 12804 / NRRL 8165 / MA-4680).